The sequence spans 340 residues: L-threonine 3-dehydrogenase (340 aa).

Cysteine 38 is a binding site for Zn(2+). Active-site charge relay system residues include threonine 40 and histidine 43. Zn(2+) is bound by residues histidine 63, glutamate 64, cysteine 93, cysteine 96, cysteine 99, and cysteine 107. NAD(+)-binding positions include isoleucine 175, aspartate 195, arginine 200, 261 to 263, and 285 to 286; these read LGI and IY.

This sequence belongs to the zinc-containing alcohol dehydrogenase family. As to quaternary structure, homotetramer. It depends on Zn(2+) as a cofactor.

The protein localises to the cytoplasm. It carries out the reaction L-threonine + NAD(+) = (2S)-2-amino-3-oxobutanoate + NADH + H(+). The protein operates within amino-acid degradation; L-threonine degradation via oxydo-reductase pathway; glycine from L-threonine: step 1/2. Functionally, catalyzes the NAD(+)-dependent oxidation of L-threonine to 2-amino-3-ketobutyrate. The chain is L-threonine 3-dehydrogenase from Stenotrophomonas maltophilia (strain K279a).